A 259-amino-acid chain; its full sequence is Probable metal transport system ATP-binding protein TC_0339 (259 aa).

One can recognise an ABC transporter domain in the interval 9 to 241; the sequence is WAVDDLCVNY…AIFQAYGCEL (233 aa). 41–48 provides a ligand contact to ATP; that stretch reads GPNGAGKS.

It belongs to the ABC transporter superfamily.

The protein localises to the cell inner membrane. Its function is as follows. Part of an ATP-driven transport system TC_0338/TC_0339/TC_0341/TC_0342 for a metal. Probably responsible for energy coupling to the transport system. The sequence is that of Probable metal transport system ATP-binding protein TC_0339 from Chlamydia muridarum (strain MoPn / Nigg).